Reading from the N-terminus, the 105-residue chain is Thioredoxin-like protein slr0233 (105 aa).

The region spanning 1–102 is the Thioredoxin domain; the sequence is MAVKKQFANF…QAAQLIQQLQ (102 aa). C30 and C33 form a disulfide bridge.

Belongs to the thioredoxin family.

The polypeptide is Thioredoxin-like protein slr0233 (Synechocystis sp. (strain ATCC 27184 / PCC 6803 / Kazusa)).